The primary structure comprises 587 residues: Glutathione hydrolase proenzyme (587 aa).

Residues 1–28 (MKRTWNVCLTALLSVLLVAGSVPFHAEA) form the signal peptide. Residues 29–35 (KKPPKSY) constitute a propeptide that is removed on maturation. Arginine 113 serves as a coordination point for L-glutamate. The Nucleophile role is filled by threonine 403. Residues threonine 421, glutamate 423, glutamate 442, aspartate 445, 464–465 (SS), and 485–486 (GG) contribute to the L-glutamate site.

This sequence belongs to the gamma-glutamyltransferase family. As to quaternary structure, this enzyme consists of two polypeptide chains, which are synthesized in precursor form from a single polypeptide. In terms of processing, cleaved by autocatalysis into a large and a small subunit.

It is found in the secreted. The catalysed reaction is an N-terminal (5-L-glutamyl)-[peptide] + an alpha-amino acid = 5-L-glutamyl amino acid + an N-terminal L-alpha-aminoacyl-[peptide]. It catalyses the reaction glutathione + H2O = L-cysteinylglycine + L-glutamate. It carries out the reaction an S-substituted glutathione + H2O = an S-substituted L-cysteinylglycine + L-glutamate. Its pathway is sulfur metabolism; glutathione metabolism. Its function is as follows. Cleaves the gamma-glutamyl bond of extracellular glutathione (gamma-Glu-Cys-Gly), glutathione conjugates, and other gamma-glutamyl compounds. The metabolism of glutathione releases free glutamate and the dipeptide cysteinyl-glycine, which is hydrolyzed to cysteine and glycine by dipeptidases. The chain is Glutathione hydrolase proenzyme (ggt) from Bacillus subtilis (strain 168).